A 630-amino-acid polypeptide reads, in one-letter code: Cytochrome B pre-mRNA-processing protein 2 (630 aa).

It is found in the mitochondrion. Appears to be specifically required for the splicing of the terminal intron (bI5) of the cytochrome b pre-mRNA. Can also stimulates the splicing of the omega intron of the precursor of large ribosomal RNA. The polypeptide is Cytochrome B pre-mRNA-processing protein 2 (CBP2) (Saccharomyces paradoxus (Yeast)).